A 198-amino-acid chain; its full sequence is dITP/XTP pyrophosphatase (198 aa).

10-15 (SGSDHK) contributes to the substrate binding site. The Mg(2+) site is built by Glu-43 and Asp-72. Catalysis depends on Asp-72, which acts as the Proton acceptor. Substrate is bound by residues Ser-73, 154–157 (FGYD), Lys-177, and 182–183 (HR).

Belongs to the HAM1 NTPase family. Homodimer. Requires Mg(2+) as cofactor.

The enzyme catalyses XTP + H2O = XMP + diphosphate + H(+). It carries out the reaction dITP + H2O = dIMP + diphosphate + H(+). It catalyses the reaction ITP + H2O = IMP + diphosphate + H(+). Its function is as follows. Pyrophosphatase that catalyzes the hydrolysis of nucleoside triphosphates to their monophosphate derivatives, with a high preference for the non-canonical purine nucleotides XTP (xanthosine triphosphate), dITP (deoxyinosine triphosphate) and ITP. Seems to function as a house-cleaning enzyme that removes non-canonical purine nucleotides from the nucleotide pool, thus preventing their incorporation into DNA/RNA and avoiding chromosomal lesions. The protein is dITP/XTP pyrophosphatase of Leptospira biflexa serovar Patoc (strain Patoc 1 / Ames).